A 157-amino-acid chain; its full sequence is MLSQWFRGRHLVVRSALFSRRRVSSESTSTKDDVIVDFEDPDLPLPEYPKRPDEPLETRKQRLMYQSRKRGMLENDLLLSTFAHKYLKDFNAEQTALYDDLINGVSNDWDIYYWATGVKQTPKEYDTEIMKLLKLHVDNAERVTRFRQPELTYYLKC.

The N-terminal 22 residues, 1-22 (MLSQWFRGRHLVVRSALFSRRR), are a transit peptide targeting the mitochondrion.

Belongs to the SDHAF2 family. As to quaternary structure, interacts with the flavoprotein subunit within the SDH catalytic dimer.

It localises to the mitochondrion matrix. In terms of biological role, plays an essential role in the assembly of succinate dehydrogenase (SDH), an enzyme complex (also referred to as respiratory complex II) that is a component of both the tricarboxylic acid (TCA) cycle and the mitochondrial electron transport chain, and which couples the oxidation of succinate to fumarate with the reduction of ubiquinone (coenzyme Q) to ubiquinol. Required for flavinylation (covalent attachment of FAD) of the flavoprotein subunit of the SDH catalytic dimer. This chain is Succinate dehydrogenase assembly factor 2-B, mitochondrial, found in Drosophila mojavensis (Fruit fly).